Here is a 210-residue protein sequence, read N- to C-terminus: Synaptosomal-associated protein 23 (210 aa).

An N-acetylmethionine modification is found at Met1. Phosphoserine occurs at positions 5, 20, 23, and 34. One can recognise a t-SNARE coiled-coil homology 1 domain in the interval 14-76; sequence HQVTDESLES…REAEKTLTEL (63 aa). Positions 23–76 form a coiled coil; that stretch reads STRRILGLAIESQDAGIKTITMLDEQGEQLNRIEEGMDQINKDMREAEKTLTEL. S-palmitoyl cysteine attachment occurs at residues Cys79, Cys80, Cys83, Cys85, and Cys87. The segment at 104-135 is disordered; sequence GDGGDNSPSNVVSKQPSRITNGQPQQTTGAAS. A compositionally biased stretch (polar residues) spans 109–133; the sequence is NSPSNVVSKQPSRITNGQPQQTTGA. Phosphoserine occurs at positions 110 and 160. Positions 145-207 constitute a t-SNARE coiled-coil homology 2 domain; that stretch reads DAREDEMEEN…DIANTRAKKL (63 aa).

Belongs to the SNAP-25 family. As to quaternary structure, homotetramer (via coiled-coil domain), also forms heterotetramers with STX4 and VAMP3. Found in a complex with VAMP8 and STX1A. Found in a complex with VAMP8 and STX4 in pancreas. Interacts simultaneously with SNAPIN and SYN4. Interacts with STX1A. Interacts with STX12. Interacts tightly to multiple syntaxins and synaptobrevins/VAMPs. Interacts with ZDHHC13 (via ANK repeats). Interacts with ZDHHC17 (via ANK repeats). In terms of processing, (Microbial infection) Targeted and hydrolyzed by C.botulinum neurotoxin type A (BoNT/A, botA) which hydrolyzes the 202-Thr-|-Arg-203 bond; the in vitro reaction is not highly efficient. Post-translationally, (Microbial infection) Targeted and hydrolyzed by C.botulinum neurotoxin type E (BoNT/E) which hydrolyzes the 185-Arg-|-Ile-186 bond; the in vitro reaction is more efficient than that of BoNT/A. Expressed in non-neuronal tissues.

It localises to the cell membrane. The protein localises to the synapse. It is found in the synaptosome. Functionally, essential component of the high affinity receptor for the general membrane fusion machinery and an important regulator of transport vesicle docking and fusion. The polypeptide is Synaptosomal-associated protein 23 (Snap23) (Mus musculus (Mouse)).